A 608-amino-acid chain; its full sequence is Isocitrate dehydrogenase kinase/phosphatase (608 aa).

ATP-binding positions include 328–334 (APGIKGL) and Lys-349. Asp-384 is an active-site residue.

Belongs to the AceK family.

The protein resides in the cytoplasm. It carries out the reaction L-seryl-[isocitrate dehydrogenase] + ATP = O-phospho-L-seryl-[isocitrate dehydrogenase] + ADP + H(+). In terms of biological role, bifunctional enzyme which can phosphorylate or dephosphorylate isocitrate dehydrogenase (IDH) on a specific serine residue. This is a regulatory mechanism which enables bacteria to bypass the Krebs cycle via the glyoxylate shunt in response to the source of carbon. When bacteria are grown on glucose, IDH is fully active and unphosphorylated, but when grown on acetate or ethanol, the activity of IDH declines drastically concomitant with its phosphorylation. The protein is Isocitrate dehydrogenase kinase/phosphatase of Cupriavidus pinatubonensis (strain JMP 134 / LMG 1197) (Cupriavidus necator (strain JMP 134)).